Reading from the N-terminus, the 245-residue chain is Membrane-spanning 4-domains subfamily A member 15 (245 aa).

The segment at 1–30 (MWERRGRGESAAGTAAVASRNASGLRPPPA) is disordered. Transmembrane regions (helical) follow at residues 78–98 (GTVQILIGLIHLGFGSVLLMV), 103–123 (LGMLFIEGGVPFWGGACFIIS), 147–167 (ILSAMAAFAGTAILLMDFGVT), and 176–196 (LAVLTIFTILEFFIAVIATHF).

The protein belongs to the MS4A family.

It is found in the membrane. Its function is as follows. May be involved in signal transduction as a component of a multimeric receptor complex. The sequence is that of Membrane-spanning 4-domains subfamily A member 15 (Ms4a15) from Mus musculus (Mouse).